Consider the following 400-residue polypeptide: MTDMPNRKPPLSGIRVIELARVLAGPWAGQMLADMGADVIKVENPEGGDDTRAWGPPFVESADGENLSAAYYHATNRGKRSIVADLKTPEGCALVRRLVRTADVVIENFKRDGLAKYGLDYESLRVLNPKLIYCSITGFGQTGPYADFAGYDYIVQGMSGFMSITGEPDGQPMKAGVAVADIFTGIYSVSAIQAALIHAMRSGEGQHIDMALLDVQSAVLANQNMNYLISGRPPIRLGNAHPNISPYEVVPTADGFLILAVGNDGQFRRLCNILGIGAIADDERYATNKARVAHKVEVRQIISTETLKWNKRDLLTACETNAVPAGPINSIEEMFADPQVQARGLRVDLEAEDGTVIPGVRTPIIMSQTPLRYERPSPKLGEHQAQVLAELETIERTATP.

Asp-181 serves as the catalytic Nucleophile.

It belongs to the CoA-transferase III family.

The enzyme catalyses glutarate + succinyl-CoA = glutaryl-CoA + succinate. It participates in amino-acid degradation. The protein operates within cofactor biosynthesis; biotin biosynthesis. In terms of biological role, is involved in L-lysine degradation and provides glutaryl-CoA for biotin synthesis. Catalyzes the conversion of glutarate to glutaryl-CoA via the transfer of CoA from succinyl-CoA. This is Succinate--glutarate CoA-transferase from Agrobacterium fabrum (strain C58 / ATCC 33970) (Agrobacterium tumefaciens (strain C58)).